The primary structure comprises 507 residues: Monocarboxylate transporter 9 (507 aa).

Residues 1–12 (MVYRKPPDGGWG) lie on the Extracellular side of the membrane. The chain crosses the membrane as a helical span at residues 13 to 33 (WVIVIVSFFTQFLCYGSPLAV). Over 34–52 (GVLYLEWLDAFGEGKGKTA) the chain is Cytoplasmic. The chain crosses the membrane as a helical span at residues 53-73 (WVGSLANGIGLLASPVCSICV). The Extracellular portion of the chain corresponds to 74-79 (SSFGAR). The helical transmembrane segment at 80 to 100 (PVAIFSGFMVAGGLMMSSFAP) threads the bilayer. The Cytoplasmic portion of the chain corresponds to 101–102 (NI). A helical transmembrane segment spans residues 103 to 123 (YFLYLSYGIVVGLGCGLLYNA). Residues 124 to 136 (TVTITCQYFDKRR) are Extracellular-facing. Residues 137-157 (GLALGLISTGSSVGLFIYAAL) traverse the membrane as a helical segment. The Cytoplasmic segment spans residues 158–163 (QRELIE). A helical membrane pass occupies residues 164-184 (LYGLDGCLLIVGALSLNILAC). Residues 185-302 (GSLMRPLESS…EETVVLFKNR (118 aa)) are Extracellular-facing. Residues 303-323 (VFSALFFAILLFDIGGFPPSL) traverse the membrane as a helical segment. The Cytoplasmic segment spans residues 324 to 340 (LMEDIARSANINEEDYH). A helical membrane pass occupies residues 341 to 361 (MPLVSIIGIMTAIGKLILGIL). Residues 362–369 (ADFKWVNT) lie on the Extracellular side of the membrane. A helical membrane pass occupies residues 370 to 390 (LYLYVLTLLMMGAALLAIPFA). Over 391-395 (RSYFT) the chain is Cytoplasmic. Residues 396–416 (LAVLSGILGFLTGNWSIFPYV) form a helical membrane-spanning segment. Residues 417 to 430 (TTKTVGIEKLTHAY) lie on the Extracellular side of the membrane. The chain crosses the membrane as a helical span at residues 431–451 (GILMFFAGLGNSLGPPIVGWF). Topologically, residues 452–460 (YDWTQEYDT) are cytoplasmic. Residues 461-481 (AFYFSGFCVLLGGFLLLLAAL) traverse the membrane as a helical segment. The Extracellular portion of the chain corresponds to 482–507 (PCWNACTDRSSKLPPNTYSYKVASSA).

It belongs to the major facilitator superfamily. Monocarboxylate porter (TC 2.A.1.13) family.

It is found in the cell membrane. It carries out the reaction creatine(in) = creatine(out). It catalyses the reaction (R)-carnitine(in) = (R)-carnitine(out). Functionally, extracellular pH-and Na(+)-sensitive low-affinity creatine transporter. Also functions as a pH-independent carnitine efflux transporter. In Gallus gallus (Chicken), this protein is Monocarboxylate transporter 9 (SLC16A9).